A 401-amino-acid chain; its full sequence is Phosphoglycerate kinase (401 aa).

Substrate is bound by residues 20 to 22, R35, 58 to 61, R117, and R154; these read DFN and HLGR. ATP contacts are provided by residues K204, G298, E329, and 358-361; that span reads GGDS.

This sequence belongs to the phosphoglycerate kinase family. In terms of assembly, monomer.

It is found in the cytoplasm. It carries out the reaction (2R)-3-phosphoglycerate + ATP = (2R)-3-phospho-glyceroyl phosphate + ADP. It participates in carbohydrate degradation; glycolysis; pyruvate from D-glyceraldehyde 3-phosphate: step 2/5. The chain is Phosphoglycerate kinase from Bifidobacterium longum (strain NCC 2705).